Reading from the N-terminus, the 210-residue chain is MSLGLVGRKCGMTRIFTEDGVSIPVTVVQVEPNKVTQVKTVEKDGYNAIQVTTGFKKRSNVNKPMAGHYAKASVEPGRGLWEFTVDAAAEYQVGSSFDATMFEAGQKVDVRGVSKGKGFQGGVKRHNFATQDATHGNSLSHRVHGSTGQNQTPGRVFKNKKMAGHLGNENVTIQSLEVVRVDAENGLLLLKGGIPGSVGGDIIVTPAVKS.

The disordered stretch occupies residues 133 to 152; sequence ATHGNSLSHRVHGSTGQNQT. At Gln151 the chain carries N5-methylglutamine.

This sequence belongs to the universal ribosomal protein uL3 family. Part of the 50S ribosomal subunit. Forms a cluster with proteins L14 and L19. Methylated by PrmB.

One of the primary rRNA binding proteins, it binds directly near the 3'-end of the 23S rRNA, where it nucleates assembly of the 50S subunit. This chain is Large ribosomal subunit protein uL3, found in Francisella tularensis subsp. holarctica (strain FTNF002-00 / FTA).